The following is a 207-amino-acid chain: 2,3-bisphosphoglycerate-dependent phosphoglycerate mutase (207 aa).

Substrate-binding positions include 10–17, 23–24, R62, 89–92, K100, 116–117, and 160–161; these read RHGQSEWN, TG, ERDY, RR, and GN. H11 acts as the Tele-phosphohistidine intermediate in catalysis. E89 serves as the catalytic Proton donor/acceptor.

The protein belongs to the phosphoglycerate mutase family. BPG-dependent PGAM subfamily. As to quaternary structure, homodimer.

It catalyses the reaction (2R)-2-phosphoglycerate = (2R)-3-phosphoglycerate. It functions in the pathway carbohydrate degradation; glycolysis; pyruvate from D-glyceraldehyde 3-phosphate: step 3/5. Its function is as follows. Catalyzes the interconversion of 2-phosphoglycerate and 3-phosphoglycerate. The chain is 2,3-bisphosphoglycerate-dependent phosphoglycerate mutase from Nitrobacter hamburgensis (strain DSM 10229 / NCIMB 13809 / X14).